The following is a 165-amino-acid chain: ATP synthase subunit b (165 aa).

The chain crosses the membrane as a helical span at residues Ser-7 to Ile-27.

It belongs to the ATPase B chain family. As to quaternary structure, F-type ATPases have 2 components, F(1) - the catalytic core - and F(0) - the membrane proton channel. F(1) has five subunits: alpha(3), beta(3), gamma(1), delta(1), epsilon(1). F(0) has three main subunits: a(1), b(2) and c(10-14). The alpha and beta chains form an alternating ring which encloses part of the gamma chain. F(1) is attached to F(0) by a central stalk formed by the gamma and epsilon chains, while a peripheral stalk is formed by the delta and b chains.

It is found in the cell membrane. Functionally, f(1)F(0) ATP synthase produces ATP from ADP in the presence of a proton or sodium gradient. F-type ATPases consist of two structural domains, F(1) containing the extramembraneous catalytic core and F(0) containing the membrane proton channel, linked together by a central stalk and a peripheral stalk. During catalysis, ATP synthesis in the catalytic domain of F(1) is coupled via a rotary mechanism of the central stalk subunits to proton translocation. Component of the F(0) channel, it forms part of the peripheral stalk, linking F(1) to F(0). In Streptococcus agalactiae serotype Ia (strain ATCC 27591 / A909 / CDC SS700), this protein is ATP synthase subunit b.